The following is a 252-amino-acid chain: Urease accessory protein UreH (252 aa).

This sequence belongs to the UreD family. UreH, UreF and UreG form a complex that acts as a GTP-hydrolysis-dependent molecular chaperone, activating the urease apoprotein by helping to assemble the nickel containing metallocenter of UreC. The UreE protein probably delivers the nickel.

It localises to the cytoplasm. Its function is as follows. Required for maturation of urease via the functional incorporation of the urease nickel metallocenter. The chain is Urease accessory protein UreH from Helicobacter hepaticus (strain ATCC 51449 / 3B1).